Consider the following 197-residue polypeptide: Transcription factor FapR (197 aa).

It belongs to the FapR family.

In terms of biological role, transcriptional factor involved in regulation of membrane lipid biosynthesis by repressing genes involved in fatty acid and phospholipid metabolism. This chain is Transcription factor FapR, found in Bacillus cereus (strain B4264).